We begin with the raw amino-acid sequence, 960 residues long: Isoleucine--tRNA ligase (960 aa).

Residues 82–92 carry the 'HIGH' region motif; that stretch reads PYANGHIHIGH. Position 606 (glutamate 606) interacts with L-isoleucyl-5'-AMP. The 'KMSKS' region signature appears at 647 to 651; the sequence is KMSKS. Lysine 650 is a binding site for ATP. Residues cysteine 931, cysteine 934, cysteine 951, and cysteine 954 each contribute to the Zn(2+) site.

Belongs to the class-I aminoacyl-tRNA synthetase family. IleS type 1 subfamily. Monomer. Requires Zn(2+) as cofactor.

Its subcellular location is the cytoplasm. The enzyme catalyses tRNA(Ile) + L-isoleucine + ATP = L-isoleucyl-tRNA(Ile) + AMP + diphosphate. Catalyzes the attachment of isoleucine to tRNA(Ile). As IleRS can inadvertently accommodate and process structurally similar amino acids such as valine, to avoid such errors it has two additional distinct tRNA(Ile)-dependent editing activities. One activity is designated as 'pretransfer' editing and involves the hydrolysis of activated Val-AMP. The other activity is designated 'posttransfer' editing and involves deacylation of mischarged Val-tRNA(Ile). The polypeptide is Isoleucine--tRNA ligase (Gluconobacter oxydans (strain 621H) (Gluconobacter suboxydans)).